Reading from the N-terminus, the 409-residue chain is Argininosuccinate synthase (409 aa).

Residues 13-21 (AYSGGLDTS) and Ala40 each bind ATP. Tyr91 and Ser96 together coordinate L-citrulline. Gly121 contacts ATP. L-aspartate contacts are provided by Thr123, Asn127, and Asp128. Position 127 (Asn127) interacts with L-citrulline. Arg131, Ser183, Ser192, Glu268, and Tyr280 together coordinate L-citrulline.

Belongs to the argininosuccinate synthase family. Type 1 subfamily. Homotetramer.

The protein localises to the cytoplasm. The enzyme catalyses L-citrulline + L-aspartate + ATP = 2-(N(omega)-L-arginino)succinate + AMP + diphosphate + H(+). The protein operates within amino-acid biosynthesis; L-arginine biosynthesis; L-arginine from L-ornithine and carbamoyl phosphate: step 2/3. The polypeptide is Argininosuccinate synthase (Saccharophagus degradans (strain 2-40 / ATCC 43961 / DSM 17024)).